Here is an 842-residue protein sequence, read N- to C-terminus: Leucine--tRNA ligase (842 aa).

The 'HIGH' region motif lies at 44–55; sequence PYPSANGLHVGH. Positions 619–623 match the 'KMSKS' region motif; it reads KMSKS. An ATP-binding site is contributed by Lys622.

This sequence belongs to the class-I aminoacyl-tRNA synthetase family.

The protein localises to the cytoplasm. The catalysed reaction is tRNA(Leu) + L-leucine + ATP = L-leucyl-tRNA(Leu) + AMP + diphosphate. The protein is Leucine--tRNA ligase of Borrelia recurrentis (strain A1).